The following is a 158-amino-acid chain: GAF domain-containing protein A (158 aa).

In terms of domain architecture, GAF spans 32–158 (NQIANLANVT…LTQILKLLDN (127 aa)).

Belongs to the free Met sulfoxide reductase family.

The chain is GAF domain-containing protein A (gafA) from Dictyostelium discoideum (Social amoeba).